The chain runs to 322 residues: Ribose-phosphate pyrophosphokinase 1 (322 aa).

ATP is bound by residues 39–41 (DGE) and 98–99 (RQ). 2 residues coordinate Mg(2+): histidine 132 and aspartate 173. Lysine 196 is a catalytic residue. D-ribose 5-phosphate is bound by residues arginine 198, aspartate 224, and 228 to 232 (DTAGT).

It belongs to the ribose-phosphate pyrophosphokinase family. Class I subfamily. As to quaternary structure, homohexamer. The cofactor is Mg(2+).

The protein localises to the cytoplasm. The enzyme catalyses D-ribose 5-phosphate + ATP = 5-phospho-alpha-D-ribose 1-diphosphate + AMP + H(+). The protein operates within metabolic intermediate biosynthesis; 5-phospho-alpha-D-ribose 1-diphosphate biosynthesis; 5-phospho-alpha-D-ribose 1-diphosphate from D-ribose 5-phosphate (route I): step 1/1. Involved in the biosynthesis of the central metabolite phospho-alpha-D-ribosyl-1-pyrophosphate (PRPP) via the transfer of pyrophosphoryl group from ATP to 1-hydroxyl of ribose-5-phosphate (Rib-5-P). This is Ribose-phosphate pyrophosphokinase 1 from Streptococcus pneumoniae serotype 4 (strain ATCC BAA-334 / TIGR4).